A 392-amino-acid chain; its full sequence is Digeranylgeranylglycerophospholipid reductase (392 aa).

Gly-15, Glu-34, Cys-45, Ala-46, Gly-48, Arg-99, Ala-123, Asp-279, Gly-291, and Ile-292 together coordinate FAD. Residue Val-370 coordinates a 2,3-bis-O-(geranylgeranyl)-sn-glycerol 1-phospholipid.

The protein belongs to the geranylgeranyl reductase family. DGGGPL reductase subfamily. FAD is required as a cofactor.

It catalyses the reaction a 2,3-bis-O-phytanyl-sn-glycerol 1-phospholipid + 8 oxidized 2[4Fe-4S]-[ferredoxin] = a 2,3-bis-O-(geranylgeranyl)-sn-glycerol 1-phospholipid + 8 reduced 2[4Fe-4S]-[ferredoxin] + 16 H(+). The enzyme catalyses 2,3-bis-O-(phytanyl)-sn-glycerol 1-phosphate + 8 oxidized 2[4Fe-4S]-[ferredoxin] = 2,3-bis-O-(geranylgeranyl)-sn-glycerol 1-phosphate + 8 reduced 2[4Fe-4S]-[ferredoxin] + 16 H(+). It carries out the reaction a 2,3-bis-O-phytanyl-sn-glycerol 1-phospholipid + 8 A = a 2,3-bis-O-(geranylgeranyl)-sn-glycerol 1-phospholipid + 8 AH2. The catalysed reaction is CDP-2,3-bis-O-(geranylgeranyl)-sn-glycerol + 8 AH2 = CDP-2,3-bis-O-(phytanyl)-sn-glycerol + 8 A. It catalyses the reaction archaetidylserine + 8 AH2 = 2,3-bis-O-phytanyl-sn-glycero-3-phospho-L-serine + 8 A. Its pathway is membrane lipid metabolism; glycerophospholipid metabolism. Its function is as follows. Is involved in the reduction of 2,3-digeranylgeranylglycerophospholipids (unsaturated archaeols) into 2,3-diphytanylglycerophospholipids (saturated archaeols) in the biosynthesis of archaeal membrane lipids. Catalyzes the formation of archaetidic acid (2,3-di-O-phytanyl-sn-glyceryl phosphate) from 2,3-di-O-geranylgeranylglyceryl phosphate (DGGGP) via the hydrogenation of each double bond of the isoprenoid chains. Is also probably able to reduce double bonds of geranyl groups in CDP-2,3-bis-O-(geranylgeranyl)-sn-glycerol and archaetidylserine, thus acting at various stages in the biosynthesis of archaeal membrane lipids. The sequence is that of Digeranylgeranylglycerophospholipid reductase from Methanocella arvoryzae (strain DSM 22066 / NBRC 105507 / MRE50).